A 157-amino-acid polypeptide reads, in one-letter code: Large ribosomal subunit protein uL10 (157 aa).

This sequence belongs to the universal ribosomal protein uL10 family. In terms of assembly, part of the ribosomal stalk of the 50S ribosomal subunit. The N-terminus interacts with L11 and the large rRNA to form the base of the stalk. The C-terminus forms an elongated spine to which L12 dimers bind in a sequential fashion forming a multimeric L10(L12)X complex.

Forms part of the ribosomal stalk, playing a central role in the interaction of the ribosome with GTP-bound translation factors. This chain is Large ribosomal subunit protein uL10, found in Campylobacter hominis (strain ATCC BAA-381 / DSM 21671 / CCUG 45161 / LMG 19568 / NCTC 13146 / CH001A).